The sequence spans 495 residues: Putative aldehyde dehydrogenase AldA (495 aa).

NAD(+) is bound at residue 212-218 (GKGSESG). Catalysis depends on residues Glu256 and Cys290.

This sequence belongs to the aldehyde dehydrogenase family.

It carries out the reaction an aldehyde + NAD(+) + H2O = a carboxylate + NADH + 2 H(+). This is Putative aldehyde dehydrogenase AldA (aldA) from Staphylococcus aureus (strain USA300).